Here is a 235-residue protein sequence, read N- to C-terminus: Large ribosomal subunit protein uL1 (235 aa).

It belongs to the universal ribosomal protein uL1 family. In terms of assembly, part of the 50S ribosomal subunit.

Functionally, binds directly to 23S rRNA. The L1 stalk is quite mobile in the ribosome, and is involved in E site tRNA release. Its function is as follows. Protein L1 is also a translational repressor protein, it controls the translation of the L11 operon by binding to its mRNA. The protein is Large ribosomal subunit protein uL1 of Nitratidesulfovibrio vulgaris (strain ATCC 29579 / DSM 644 / CCUG 34227 / NCIMB 8303 / VKM B-1760 / Hildenborough) (Desulfovibrio vulgaris).